An 886-amino-acid polypeptide reads, in one-letter code: MTASPHPAADMLPKSWDPAAMESAIYQKWLDAGYFTADPTSTKPAYSIVLPPPNVTGSLHMGHALEHTMMDALTRRKRMQGYEVLWQPGTDHAGIATQSVVEQQLAVDGKTKEDLGRELFVDKVWDWKRESGGAIGGQMRRLGDGVDWSRDRFTMDEGLSRAVRTIFKRLYDAGLIYRAERLVNWSPVLQTAISDLEVNYRDVEGELVSFRYGSLDDSQPHIVVATTRVETMLGDTAIAVHPDDERYRHLVGTSLAHPFVDRELAIVADEHVDPEFGTGAVKVTPAHDPNDFEIGVRHQLPMPSILDTKGRIVDTGTRFDGMDRFEARVAVRQALAAQGRVVEEKRPYLHSVGHSERSGEPIEPRLSLQWWVRVESLAKAAGDAVRNGDTVIHPASMEPRWFSWVDDMHDWCISRQLWWGHRIPIWYGPDGEQVCVGPDETPPQGWEQDPDVLDTWFSSALWPFSTLGWPDKTAELEKFYPTSVLVTGYDILFFWVARMMMFGTFVGDDAAITLDGRRGPQVPFTDVFLHGLIRDESGRKMSKSKGNVIDPLDWVEMFGADALRFTLARGASPGGDLAVSEDAVRASRNFGTKLFNATRYALLNGAAPAPLPSPNELTDADRWILGRLEEVRAEVDSAFDGYEFSRACESLYHFAWDEFCDWYLELAKTQLAQGLTHTTAVLAAGLDTLLRLLHPVIPFLTEALWLALTGRESLVSADWPEPSGISVDLVAAQRINDMQKLVTEVRRFRSDQGLADRQKVPARMHGVRDSDLSNQVAAVTSLAWLTEPGPDFEPSVSLEVRLGPEMNRTVVVELDTSGTIDVAAERRRLEKELAGAQKELASTAAKLANADFLAKAPDAVIAKIRDRQRVAQQETERITTRLAALQ.

The short motif at 53-63 (PNVTGSLHMGH) is the 'HIGH' region element. The 'KMSKS' region motif lies at 540–544 (KMSKS). Residue Lys-543 participates in ATP binding. The stretch at 819–851 (TIDVAAERRRLEKELAGAQKELASTAAKLANAD) forms a coiled coil.

This sequence belongs to the class-I aminoacyl-tRNA synthetase family. ValS type 1 subfamily. Monomer.

The protein localises to the cytoplasm. It carries out the reaction tRNA(Val) + L-valine + ATP = L-valyl-tRNA(Val) + AMP + diphosphate. In terms of biological role, catalyzes the attachment of valine to tRNA(Val). As ValRS can inadvertently accommodate and process structurally similar amino acids such as threonine, to avoid such errors, it has a 'posttransfer' editing activity that hydrolyzes mischarged Thr-tRNA(Val) in a tRNA-dependent manner. In Mycobacterium tuberculosis (strain CDC 1551 / Oshkosh), this protein is Valine--tRNA ligase.